A 515-amino-acid chain; its full sequence is Gap junction alpha-9 protein (515 aa).

Over methionine 1–threonine 19 the chain is Cytoplasmic. A helical transmembrane segment spans residues methionine 20–alanine 40. The Extracellular portion of the chain corresponds to alanine 41–tyrosine 77. A helical transmembrane segment spans residues tryptophan 78–tyrosine 98. Topologically, residues arginine 99–valine 166 are cytoplasmic. Residues valine 167–phenylalanine 187 traverse the membrane as a helical segment. Topologically, residues lysine 188–threonine 209 are extracellular. The chain crosses the membrane as a helical span at residues isoleucine 210 to isoleucine 230. At phenylalanine 231–isoleucine 515 the chain is on the cytoplasmic side. Over residues lysine 370 to arginine 380 the composition is skewed to basic and acidic residues. Disordered stretches follow at residues lysine 370–asparagine 400 and serine 428–aspartate 472. Polar residues predominate over residues proline 456–aspartate 472.

It belongs to the connexin family. Alpha-type (group II) subfamily. As to quaternary structure, a connexon is composed of a hexamer of connexins. Highly abundant in skeletal muscle. Also detected in testis.

It is found in the cell membrane. It localises to the cell junction. The protein resides in the gap junction. Its function is as follows. One gap junction consists of a cluster of closely packed pairs of transmembrane channels, the connexons, through which materials of low MW diffuse from one cell to a neighboring cell. In Homo sapiens (Human), this protein is Gap junction alpha-9 protein (GJA9).